Consider the following 194-residue polypeptide: GTP cyclohydrolase-2 (194 aa).

47-51 (RVHSE) provides a ligand contact to GTP. Residues cysteine 52, cysteine 63, and cysteine 65 each contribute to the Zn(2+) site. GTP contacts are provided by residues glutamine 68, 90-92 (EGR), and threonine 112. Catalysis depends on aspartate 124, which acts as the Proton acceptor. The active-site Nucleophile is the arginine 126. The GTP site is built by threonine 147 and lysine 152.

Belongs to the GTP cyclohydrolase II family. In terms of assembly, homodimer. Zn(2+) serves as cofactor.

The enzyme catalyses GTP + 4 H2O = 2,5-diamino-6-hydroxy-4-(5-phosphoribosylamino)-pyrimidine + formate + 2 phosphate + 3 H(+). The protein operates within cofactor biosynthesis; riboflavin biosynthesis; 5-amino-6-(D-ribitylamino)uracil from GTP: step 1/4. In terms of biological role, catalyzes the conversion of GTP to 2,5-diamino-6-ribosylamino-4(3H)-pyrimidinone 5'-phosphate (DARP), formate and pyrophosphate. The chain is GTP cyclohydrolase-2 from Buchnera aphidicola subsp. Acyrthosiphon pisum (strain APS) (Acyrthosiphon pisum symbiotic bacterium).